Here is a 91-residue protein sequence, read N- to C-terminus: ATP synthase subunit c (91 aa).

2 helical membrane-spanning segments follow: residues L4–I24 and I53–L73.

The protein belongs to the ATPase C chain family. F-type ATPases have 2 components, F(1) - the catalytic core - and F(0) - the membrane proton channel. F(1) has five subunits: alpha(3), beta(3), gamma(1), delta(1), epsilon(1). F(0) has three main subunits: a(1), b(2) and c(10-14). The alpha and beta chains form an alternating ring which encloses part of the gamma chain. F(1) is attached to F(0) by a central stalk formed by the gamma and epsilon chains, while a peripheral stalk is formed by the delta and b chains.

It is found in the cell inner membrane. F(1)F(0) ATP synthase produces ATP from ADP in the presence of a proton or sodium gradient. F-type ATPases consist of two structural domains, F(1) containing the extramembraneous catalytic core and F(0) containing the membrane proton channel, linked together by a central stalk and a peripheral stalk. During catalysis, ATP synthesis in the catalytic domain of F(1) is coupled via a rotary mechanism of the central stalk subunits to proton translocation. Functionally, key component of the F(0) channel; it plays a direct role in translocation across the membrane. A homomeric c-ring of between 10-14 subunits forms the central stalk rotor element with the F(1) delta and epsilon subunits. In Geobacter metallireducens (strain ATCC 53774 / DSM 7210 / GS-15), this protein is ATP synthase subunit c.